A 149-amino-acid polypeptide reads, in one-letter code: Large ribosomal subunit protein bL9 (149 aa).

Belongs to the bacterial ribosomal protein bL9 family.

Functionally, binds to the 23S rRNA. This is Large ribosomal subunit protein bL9 from Chromobacterium violaceum (strain ATCC 12472 / DSM 30191 / JCM 1249 / CCUG 213 / NBRC 12614 / NCIMB 9131 / NCTC 9757 / MK).